Consider the following 239-residue polypeptide: Pyrroloquinoline-quinone synthase (239 aa).

Belongs to the PqqC family.

The catalysed reaction is 6-(2-amino-2-carboxyethyl)-7,8-dioxo-1,2,3,4,7,8-hexahydroquinoline-2,4-dicarboxylate + 3 O2 = pyrroloquinoline quinone + 2 H2O2 + 2 H2O + H(+). Its pathway is cofactor biosynthesis; pyrroloquinoline quinone biosynthesis. In terms of biological role, ring cyclization and eight-electron oxidation of 3a-(2-amino-2-carboxyethyl)-4,5-dioxo-4,5,6,7,8,9-hexahydroquinoline-7,9-dicarboxylic-acid to PQQ. This chain is Pyrroloquinoline-quinone synthase, found in Gluconobacter oxydans (strain 621H) (Gluconobacter suboxydans).